We begin with the raw amino-acid sequence, 209 residues long: Uracil phosphoribosyltransferase (209 aa).

5-phospho-alpha-D-ribose 1-diphosphate contacts are provided by residues Arg79, Arg104, and 131-139; that span reads DPMLATGGS. Uracil is bound by residues Ile194 and 199 to 201; that span reads GDA. Asp200 provides a ligand contact to 5-phospho-alpha-D-ribose 1-diphosphate.

Belongs to the UPRTase family. Requires Mg(2+) as cofactor.

The enzyme catalyses UMP + diphosphate = 5-phospho-alpha-D-ribose 1-diphosphate + uracil. The protein operates within pyrimidine metabolism; UMP biosynthesis via salvage pathway; UMP from uracil: step 1/1. With respect to regulation, allosterically activated by GTP. In terms of biological role, catalyzes the conversion of uracil and 5-phospho-alpha-D-ribose 1-diphosphate (PRPP) to UMP and diphosphate. In Clostridium perfringens (strain SM101 / Type A), this protein is Uracil phosphoribosyltransferase.